A 1029-amino-acid chain; its full sequence is Ig-like and fibronectin type-III domain-containing protein 1 (1029 aa).

The first 22 residues, 1–22 (MCNVAEDPSSFSTITIATTCRA), serve as a signal peptide directing secretion. Residues 23–918 (EWPKVSPCIA…RRSASKGSSS (896 aa)) are Extracellular-facing. 4 N-linked (GlcNAc...) asparagine glycosylation sites follow: Asn-36, Asn-93, Asn-120, and Asn-165. One can recognise a Fibronectin type-III 1 domain in the interval 90 to 181 (APGNVTISEL…TAKLFSTLPT (92 aa)). Residues 185 to 227 (PLCTIGEPIYMNDGRVMICDAVNPCPNGFRCTGAGSDLSYCCP) enclose the WR1 domain. Asn-257, Asn-374, Asn-409, Asn-442, Asn-482, Asn-507, and Asn-552 each carry an N-linked (GlcNAc...) asparagine glycan. Fibronectin type-III domains are found at residues 330 to 417 (AVRN…TKPA) and 427 to 523 (APEK…AQKD). The Ig-like C2-type domain occupies 619–710 (ASVTMKKDKI…SRVEASSEVI (92 aa)). Cys-640 and Cys-693 are oxidised to a cystine. N-linked (GlcNAc...) asparagine glycosylation is present at Asn-753. Residues 817–909 (APSEVSNVRI…SAIPKDSEPR (93 aa)) form the Fibronectin type-III 4 domain. A helical transmembrane segment spans residues 919–939 (AFWIVVILVVFGVLIAGLAVL). Over 940–1029 (SKRRELPYPI…NGMRYAKLET (90 aa)) the chain is Cytoplasmic. Residues 988 to 1021 (SATTGTAAATQSEWQSANLEANSTTDNSHEYRNG) are disordered. The segment covering 998 to 1013 (QSEWQSANLEANSTTD) has biased composition (polar residues).

It localises to the cell membrane. The protein is Ig-like and fibronectin type-III domain-containing protein 1 of Caenorhabditis elegans.